Reading from the N-terminus, the 250-residue chain is Probable transcriptional regulatory protein Cag_0165 (250 aa).

Belongs to the TACO1 family.

The protein resides in the cytoplasm. The chain is Probable transcriptional regulatory protein Cag_0165 from Chlorobium chlorochromatii (strain CaD3).